The following is a 187-amino-acid chain: dCTP deaminase (187 aa).

DCTP-binding positions include 110-115 (KSTYAR), 134-136 (TLE), Gln155, Tyr169, and Gln179. Residue Glu136 is the Proton donor/acceptor of the active site.

The protein belongs to the dCTP deaminase family. In terms of assembly, homotrimer.

The catalysed reaction is dCTP + H2O + H(+) = dUTP + NH4(+). It participates in pyrimidine metabolism; dUMP biosynthesis; dUMP from dCTP (dUTP route): step 1/2. Catalyzes the deamination of dCTP to dUTP. The sequence is that of dCTP deaminase from Bordetella bronchiseptica (strain ATCC BAA-588 / NCTC 13252 / RB50) (Alcaligenes bronchisepticus).